The sequence spans 136 residues: Large ribosomal subunit protein bL19 (136 aa).

Positions 1–23 (MEETVNNQETPETSEEETADEET) are disordered. Over residues 12–23 (ETSEEETADEET) the composition is skewed to acidic residues.

Belongs to the bacterial ribosomal protein bL19 family.

In terms of biological role, this protein is located at the 30S-50S ribosomal subunit interface and may play a role in the structure and function of the aminoacyl-tRNA binding site. The polypeptide is Large ribosomal subunit protein bL19 (Dehalococcoides mccartyi (strain ATCC BAA-2266 / KCTC 15142 / 195) (Dehalococcoides ethenogenes (strain 195))).